The following is a 287-amino-acid chain: MAVGKEIKTKIASVKGTQKITSAMEMVAASKMRKAQEGMAASRPYATNIRNVIGHIALGNLEYRHPYMDEREAKRVGYIVVSSDRGLCGGLNINLFKKVLADAAEKQASGAEVEFCVIGSKATAFFNNMGAKVSAQISGLGDSPSLTDLVGSVAVMLKAYDNGEIDRLHVVYNKFVNTMTQEPTIDQLLPLPKSDDEAISHRWDYIYEPDANSLLDQLLVRYIESQVYQGVVENIACEQASRMVSMKAATDNAGDLIDDLQLVYNKARQAAITQELGEIVAGAAAVG.

The protein belongs to the ATPase gamma chain family. As to quaternary structure, F-type ATPases have 2 components, CF(1) - the catalytic core - and CF(0) - the membrane proton channel. CF(1) has five subunits: alpha(3), beta(3), gamma(1), delta(1), epsilon(1). CF(0) has three main subunits: a, b and c.

The protein resides in the cell inner membrane. In terms of biological role, produces ATP from ADP in the presence of a proton gradient across the membrane. The gamma chain is believed to be important in regulating ATPase activity and the flow of protons through the CF(0) complex. This Colwellia maris protein is ATP synthase gamma chain.